The chain runs to 437 residues: Trigger factor (437 aa).

The PPIase FKBP-type domain maps to 161 to 246 (GDRVNIDFKG…VNKVEGKALP (86 aa)).

Belongs to the FKBP-type PPIase family. Tig subfamily.

It is found in the cytoplasm. It carries out the reaction [protein]-peptidylproline (omega=180) = [protein]-peptidylproline (omega=0). Its function is as follows. Involved in protein export. Acts as a chaperone by maintaining the newly synthesized protein in an open conformation. Functions as a peptidyl-prolyl cis-trans isomerase. The sequence is that of Trigger factor from Alcanivorax borkumensis (strain ATCC 700651 / DSM 11573 / NCIMB 13689 / SK2).